Consider the following 963-residue polypeptide: Phosphofurin acidic cluster sorting protein 1 (963 aa).

Gly residues predominate over residues Met1 to Gly22. Disordered stretches follow at residues Met1–Thr72 and Val78–Ala97. Ala2 is modified (N-acetylalanine). Residue Ser28 is modified to Phosphoserine. Thr46 is modified (phosphothreonine). Low complexity predominate over residues Ala53 to Thr72. An involved in binding to AP-1 region spans residues Glu168–Phe175. Tyr251 bears the Phosphotyrosine mark. The span at Gly262 to Asp273 shows a compositional bias: basic and acidic residues. 2 disordered regions span residues Gly262–Gln299 and Asn377–Thr428. Residues Asn276–Asp293 are compositionally biased toward acidic residues. The stretch at His353–Asn377 forms a coiled coil. 2 positions are modified to phosphoserine: Ser379 and Ser381. The span at Met406–Thr428 shows a compositional bias: polar residues. Residues Ser430 and Ser495 each carry the phosphoserine modification. Disordered regions lie at residues Pro476–Gln542 and Ser760–Ser804. Residues Met483 to Pro496 are compositionally biased toward polar residues. A Phosphothreonine modification is found at Thr504. Phosphoserine is present on residues Ser519, Ser528, Ser529, Ser531, and Ser534. Over residues Ser770–Ser804 the composition is skewed to low complexity.

This sequence belongs to the PACS family. Associates with AP-1 and AP-3 but not with AP-2 complexes. Interacts with FURIN. Forms a ternary complex with FURIN and AP-1. Interacts with NPHP1; the interaction is dependent of NPHP1 phosphorylation by CK2. Interacts with PKD2 (via acidic region). Interacts with SORL1. Interacts with WDR37. As to quaternary structure, (Microbial infection) Interacts with HIV-1 Nef. In terms of assembly, (Microbial infection) Interacts with Epstein-barr virus protein BBLF1.

It is found in the golgi apparatus. Its subcellular location is the trans-Golgi network. Coat protein that is involved in the localization of trans-Golgi network (TGN) membrane proteins that contain acidic cluster sorting motifs. Controls the endosome-to-Golgi trafficking of furin and mannose-6-phosphate receptor by connecting the acidic-cluster-containing cytoplasmic domain of these molecules with the adapter-protein complex-1 (AP-1) of endosomal clathrin-coated membrane pits. Involved in HIV-1 nef-mediated removal of MHC-I from the cell surface to the TGN. Required for normal ER Ca2+ handling in lymphocytes. Together with WDR37, it plays an essential role in lymphocyte development, quiescence and survival. Required for stabilizing peripheral lymphocyte populations. The chain is Phosphofurin acidic cluster sorting protein 1 (PACS1) from Homo sapiens (Human).